The following is a 310-amino-acid chain: Lipoyl synthase (310 aa).

7 residues coordinate [4Fe-4S] cluster: C54, C59, C65, C80, C84, C87, and S295. The Radical SAM core domain occupies 66–284 (FASGTATFLI…LFGEDNLGFM (219 aa)).

Belongs to the radical SAM superfamily. Lipoyl synthase family. [4Fe-4S] cluster serves as cofactor.

It localises to the cytoplasm. It catalyses the reaction [[Fe-S] cluster scaffold protein carrying a second [4Fe-4S](2+) cluster] + N(6)-octanoyl-L-lysyl-[protein] + 2 oxidized [2Fe-2S]-[ferredoxin] + 2 S-adenosyl-L-methionine + 4 H(+) = [[Fe-S] cluster scaffold protein] + N(6)-[(R)-dihydrolipoyl]-L-lysyl-[protein] + 4 Fe(3+) + 2 hydrogen sulfide + 2 5'-deoxyadenosine + 2 L-methionine + 2 reduced [2Fe-2S]-[ferredoxin]. Its pathway is protein modification; protein lipoylation via endogenous pathway; protein N(6)-(lipoyl)lysine from octanoyl-[acyl-carrier-protein]: step 2/2. Functionally, catalyzes the radical-mediated insertion of two sulfur atoms into the C-6 and C-8 positions of the octanoyl moiety bound to the lipoyl domains of lipoate-dependent enzymes, thereby converting the octanoylated domains into lipoylated derivatives. In Prochlorococcus marinus (strain MIT 9215), this protein is Lipoyl synthase.